Reading from the N-terminus, the 100-residue chain is Aspartyl/glutamyl-tRNA(Asn/Gln) amidotransferase subunit C (100 aa).

It belongs to the GatC family. As to quaternary structure, heterotrimer of A, B and C subunits.

The catalysed reaction is L-glutamyl-tRNA(Gln) + L-glutamine + ATP + H2O = L-glutaminyl-tRNA(Gln) + L-glutamate + ADP + phosphate + H(+). The enzyme catalyses L-aspartyl-tRNA(Asn) + L-glutamine + ATP + H2O = L-asparaginyl-tRNA(Asn) + L-glutamate + ADP + phosphate + 2 H(+). Allows the formation of correctly charged Asn-tRNA(Asn) or Gln-tRNA(Gln) through the transamidation of misacylated Asp-tRNA(Asn) or Glu-tRNA(Gln) in organisms which lack either or both of asparaginyl-tRNA or glutaminyl-tRNA synthetases. The reaction takes place in the presence of glutamine and ATP through an activated phospho-Asp-tRNA(Asn) or phospho-Glu-tRNA(Gln). The sequence is that of Aspartyl/glutamyl-tRNA(Asn/Gln) amidotransferase subunit C from Rickettsia bellii (strain OSU 85-389).